A 114-amino-acid polypeptide reads, in one-letter code: Cell cycle protein GpsB (114 aa).

Residues 42–77 adopt a coiled-coil conformation; that stretch reads YQKMADMNNEVVKLSEENHKLKKELEELRLRVATSR. The segment at 74 to 99 is disordered; the sequence is ATSRPQDNKSFSSNNTTTNTSSNNVD. Low complexity predominate over residues 85 to 97; the sequence is SSNNTTTNTSSNN.

This sequence belongs to the GpsB family. Forms polymers through the coiled coil domains. Interacts with PBP1, MreC and EzrA.

The protein resides in the cytoplasm. Functionally, divisome component that associates with the complex late in its assembly, after the Z-ring is formed, and is dependent on DivIC and PBP2B for its recruitment to the divisome. Together with EzrA, is a key component of the system that regulates PBP1 localization during cell cycle progression. Its main role could be the removal of PBP1 from the cell pole after pole maturation is completed. Also contributes to the recruitment of PBP1 to the division complex. Not essential for septum formation. This Staphylococcus aureus (strain Mu3 / ATCC 700698) protein is Cell cycle protein GpsB.